Here is a 115-residue protein sequence, read N- to C-terminus: Migration and invasion enhancer 1 (115 aa).

An N-acetylserine modification is found at Ser2. Cys30 and Cys33 are joined by a disulfide. Cys112 carries the S-geranylgeranyl cysteine lipid modification. Residues Val113 to Leu115 constitute a propeptide, removed in mature form.

It belongs to the SelWTH family. As to quaternary structure, interacts with GPX1. Isoprenylation facilitates association with the plasma membrane and enhances the migratory phenotype of cells by inducing increased filopodia formation. As to expression, widely expressed with highest levels in kidney followed by brain and testis.

The protein resides in the cytoplasm. It is found in the cytosol. The protein localises to the cell membrane. Functionally, increases cell migration by inducing filopodia formation at the leading edge of migrating cells. Plays a role in regulation of apoptosis, possibly through control of CASP3. May be involved in a redox-related process. The chain is Migration and invasion enhancer 1 (Mien1) from Mus musculus (Mouse).